The sequence spans 714 residues: Probable serine/threonine-protein kinase mkcB (714 aa).

Residues 1–12 (MKSILKKAKHFF) show a composition bias toward basic residues. Disordered stretches follow at residues 1 to 267 (MKSI…SSTS) and 281 to 349 (GSGS…EQKP). Over residues 23–35 (GGEKTAKESESQQ) the composition is skewed to basic and acidic residues. A compositionally biased stretch (low complexity) spans 62-83 (SQSQPTTSALQTSTSLQPSSSL). A compositionally biased stretch (polar residues) spans 84–94 (HQIPQSQSSLE). 2 stretches are compositionally biased toward low complexity: residues 95–111 (LTTN…TKQL) and 120–166 (PHSQ…TLTT). Residues 167–177 (PVPSSENLATL) show a composition bias toward polar residues. Composition is skewed to low complexity over residues 178–241 (STST…QEQT) and 254–267 (LSQS…SSTS). Residues 282–294 (SGSTKNKDSSSAP) are compositionally biased toward polar residues. Low complexity-rich tracts occupy residues 300–314 (NNNN…KNRS) and 324–337 (NNNN…KNNN). One can recognise a Protein kinase domain in the interval 438–687 (YKDSDQVGKG…AEELLKHPFI (250 aa)). ATP-binding positions include 444 to 452 (VGKGGFGTV) and K467. D558 acts as the Proton acceptor in catalysis.

The protein belongs to the protein kinase superfamily. STE Ser/Thr protein kinase family. STE20 subfamily. Mg(2+) is required as a cofactor. As to expression, expressed at equal levels in prestalk and prespore cells.

It carries out the reaction L-seryl-[protein] + ATP = O-phospho-L-seryl-[protein] + ADP + H(+). The catalysed reaction is L-threonyl-[protein] + ATP = O-phospho-L-threonyl-[protein] + ADP + H(+). In Dictyostelium discoideum (Social amoeba), this protein is Probable serine/threonine-protein kinase mkcB.